Consider the following 601-residue polypeptide: Sulfite reductase [NADPH] flavoprotein alpha-component (601 aa).

The Flavodoxin-like domain maps to 65 to 203; that stretch reads ITIISASQTG…NYNKWSQDLL (139 aa). FMN-binding positions include 71 to 76, 118 to 121, and 154 to 163; these read SQTGNA, STQG, and LGDTSYNLFC. Residues 236–450 enclose the FAD-binding FR-type domain; the sequence is KNPAEGIILT…IQTNDNFRLP (215 aa). FAD-binding positions include Thr-324, Ile-358, 388-391, 406-408, and 421-424; these read RLYS, TVG, and GGAS. NADP(+) is bound by residues 521 to 522, 527 to 531, and Asp-563; these read SQ and KIYVQ. Tyr-601 is a binding site for FAD.

Belongs to the NADPH-dependent sulphite reductase flavoprotein subunit CysJ family. The protein in the N-terminal section; belongs to the flavodoxin family. It in the C-terminal section; belongs to the flavoprotein pyridine nucleotide cytochrome reductase family. Alpha(8)-beta(8). The alpha component is a flavoprotein, the beta component is a hemoprotein. Requires FAD as cofactor. FMN is required as a cofactor.

The enzyme catalyses hydrogen sulfide + 3 NADP(+) + 3 H2O = sulfite + 3 NADPH + 4 H(+). It participates in sulfur metabolism; hydrogen sulfide biosynthesis; hydrogen sulfide from sulfite (NADPH route): step 1/1. Functionally, component of the sulfite reductase complex that catalyzes the 6-electron reduction of sulfite to sulfide. This is one of several activities required for the biosynthesis of L-cysteine from sulfate. The flavoprotein component catalyzes the electron flow from NADPH -&gt; FAD -&gt; FMN to the hemoprotein component. This is Sulfite reductase [NADPH] flavoprotein alpha-component from Buchnera aphidicola subsp. Acyrthosiphon pisum (strain APS) (Acyrthosiphon pisum symbiotic bacterium).